The sequence spans 82 residues: UPF0512 protein P (82 aa).

This sequence belongs to the UPF0512 family.

The sequence is that of UPF0512 protein P from Dictyostelium discoideum (Social amoeba).